Here is a 254-residue protein sequence, read N- to C-terminus: Low affinity immunoglobulin gamma Fc region receptor III-A (254 aa).

A signal peptide spans Met-1–Ala-20. Ig-like C2-type domains follow at residues Pro-24 to His-105 and Gly-107 to Thr-189. Disulfide bonds link Cys-47-Cys-89 and Cys-128-Cys-172. Asn-187 is a glycosylation site (N-linked (GlcNAc...) asparagine). The helical transmembrane segment at Tyr-207–Val-229 threads the bilayer. The disordered stretch occupies residues Pro-234–Lys-254. Residues Asp-239 to Lys-254 show a composition bias toward basic and acidic residues.

In terms of assembly, forms a heterooligomeric complex with ITAM-containing signaling subunits, either a homodimer of CD247, a homodimer of FCER1G or a heterodimer of CD247 and FCER1G, to form a functional receptor complex. Interacts (via transmembrane domain) with signaling subunits; this interaction is a prerequisite for receptor complex expression on the cell surface and intracellular signal transduction. Binds the Fc region of antigen-complexed IgG with a preference for IgG1 and IgG3 isotypes. Interacts with CD2; this interaction is involved in NK cell activation and cytotoxicity. Interacts with S100A4; this interaction inhibits PKC-dependent phosphorylation of FCGR3A. Post-translationally, glycosylated. Glycosylation plays an inhibitory role in the interaction with IgG1 and IgG2. Undergoes rapid ectodomain shedding upon NK cell stimulation. The soluble form is produced by a proteolytic cleavage mediated by ADAM17. Repeated stimulation causes receptor shedding, a mechanism that allows for increased NK cell motility and detachment from opsonized target cells while avoiding activation-induced NK cell apoptosis. In terms of tissue distribution, lymphocytes and monocytes.

Its subcellular location is the cell membrane. It localises to the secreted. Functionally, receptor for the invariable Fc fragment of immunoglobulin gamma (IgG). Optimally activated upon binding of clustered antigen-IgG complexes displayed on cell surfaces, triggers lysis of antibody-coated cells, a process known as antibody-dependent cellular cytotoxicity (ADCC). Does not bind free monomeric IgG, thus avoiding inappropriate effector cell activation in the absence of antigenic trigger. Mediates IgG effector functions on natural killer (NK) cells. Binds antigen-IgG complexes generated upon infection and triggers NK cell-dependent cytokine production and degranulation to limit viral load and propagation. Involved in the generation of memory-like adaptive NK cells capable to produce high amounts of IFNG and to efficiently eliminate virus-infected cells via ADCC. Regulates NK cell survival and proliferation, in particular by preventing NK cell progenitor apoptosis. Fc-binding subunit that associates with CD247 and/or FCER1G adapters to form functional signaling complexes. Following the engagement of antigen-IgG complexes, triggers phosphorylation of immunoreceptor tyrosine-based activation motif (ITAM)-containing adapters with subsequent activation of phosphatidylinositol 3-kinase signaling and sustained elevation of intracellular calcium that ultimately drive NK cell activation. The ITAM-dependent signaling coupled to receptor phosphorylation by PKC mediates robust intracellular calcium flux that leads to production of pro-inflammatory cytokines, whereas in the absence of receptor phosphorylation it mainly activates phosphatidylinositol 3-kinase signaling leading to cell degranulation. Costimulates NK cells and trigger lysis of target cells independently of IgG binding. Mediates the antitumor activities of therapeutic antibodies. Upon ligation on monocytes triggers TNFA-dependent ADCC of IgG-coated tumor cells. Mediates enhanced ADCC in response to afucosylated IgGs. This is Low affinity immunoglobulin gamma Fc region receptor III-A (FCGR3A) from Papio anubis (Olive baboon).